The chain runs to 138 residues: Transcription antitermination protein NusB (138 aa).

This sequence belongs to the NusB family.

Functionally, involved in transcription antitermination. Required for transcription of ribosomal RNA (rRNA) genes. Binds specifically to the boxA antiterminator sequence of the ribosomal RNA (rrn) operons. The chain is Transcription antitermination protein NusB from Yersinia enterocolitica serotype O:8 / biotype 1B (strain NCTC 13174 / 8081).